Here is a 323-residue protein sequence, read N- to C-terminus: tRNA U34 carboxymethyltransferase (323 aa).

Residues lysine 91, tryptophan 105, lysine 110, glycine 130, 152-154 (DPT), 181-182 (IE), methionine 196, tyrosine 200, and arginine 315 contribute to the carboxy-S-adenosyl-L-methionine site.

It belongs to the class I-like SAM-binding methyltransferase superfamily. CmoB family. In terms of assembly, homotetramer.

The enzyme catalyses carboxy-S-adenosyl-L-methionine + 5-hydroxyuridine(34) in tRNA = 5-carboxymethoxyuridine(34) in tRNA + S-adenosyl-L-homocysteine + H(+). Functionally, catalyzes carboxymethyl transfer from carboxy-S-adenosyl-L-methionine (Cx-SAM) to 5-hydroxyuridine (ho5U) to form 5-carboxymethoxyuridine (cmo5U) at position 34 in tRNAs. This Salmonella enteritidis PT4 (strain P125109) protein is tRNA U34 carboxymethyltransferase.